Here is a 338-residue protein sequence, read N- to C-terminus: DNA-directed RNA polymerase subunit alpha (338 aa).

The segment at 1–234 (MIERNWNELI…DQLQIFITFE (234 aa)) is alpha N-terminal domain (alpha-NTD). The segment at 250–338 (FNPALLKKVD…DLAKKFEDQI (89 aa)) is alpha C-terminal domain (alpha-CTD).

Belongs to the RNA polymerase alpha chain family. As to quaternary structure, homodimer. The RNAP catalytic core consists of 2 alpha, 1 beta, 1 beta' and 1 omega subunit. When a sigma factor is associated with the core the holoenzyme is formed, which can initiate transcription.

It catalyses the reaction RNA(n) + a ribonucleoside 5'-triphosphate = RNA(n+1) + diphosphate. In terms of biological role, DNA-dependent RNA polymerase catalyzes the transcription of DNA into RNA using the four ribonucleoside triphosphates as substrates. This is DNA-directed RNA polymerase subunit alpha from Caulobacter sp. (strain K31).